Reading from the N-terminus, the 229-residue chain is MNNMVLLKCKNVTKTYKTNKKKIIILNNINLSIYNSETISIIGDSGSGKSTLLYLLSGLDNPTTGKITFKGKEINKLSSSDRSYLRNKNFGFIYQFHHLLTDFSVLENVAMPALIGNFSVKHAKNLAYKLLLEVGLKNRINHKPSEISGGERQRAAIARSLINNPKIVFADEPTGNLDNTSSKKFFCLLKKVNVEKKTAFLVVTHNIKLAKKLDKTLEIKNGKLYKKNL.

Residues 7 to 229 (LKCKNVTKTY…KNGKLYKKNL (223 aa)) enclose the ABC transporter domain. 43-50 (GDSGSGKS) serves as a coordination point for ATP.

Belongs to the ABC transporter superfamily. Lipoprotein translocase (TC 3.A.1.125) family. As to quaternary structure, the complex is composed of two ATP-binding proteins (LolD) and two transmembrane proteins (LolC and LolE).

Its subcellular location is the cell membrane. Its function is as follows. Part of the ABC transporter complex LolCDE involved in the translocation of lipoproteins, in an ATP-dependent manner. This chain is Lipoprotein-releasing system ATP-binding protein LolD, found in Wigglesworthia glossinidia brevipalpis.